The sequence spans 102 residues: Protein Tat (102 aa).

The interval 1 to 24 (MEPVDPRLEPWKHPGSQPKTACNN) is interaction with human CREBBP. The tract at residues 1–48 (MEPVDPRLEPWKHPGSQPKTACNNCYCKKCCYHCQVCFLTKGLGISYG) is transactivation. Residues cysteine 22, cysteine 25, and cysteine 27 each contribute to the Zn(2+) site. The interval 22–37 (CNNCYCKKCCYHCQVC) is cysteine-rich. Lysine 28 is subject to N6-acetyllysine; by host PCAF. Zn(2+)-binding residues include cysteine 30, histidine 33, cysteine 34, and cysteine 37. The core stretch occupies residues 38 to 48 (FLTKGLGISYG). The disordered stretch occupies residues 48–102 (GRKKRRQRRGPPQGSQTHQVSLSKQPTSQPRGDPTGPKESKEKVERETETDPAVQ). The short motif at 49–57 (RKKRRQRRG) is the Nuclear localization signal, RNA-binding (TAR), and protein transduction element. The interaction with the host capping enzyme RNGTT stretch occupies residues 49–86 (RKKRRQRRGPPQGSQTHQVSLSKQPTSQPRGDPTGPKE). N6-acetyllysine; by host EP300 and GCN5L2 is present on residues lysine 50 and lysine 51. Arginine 52 and arginine 53 each carry asymmetric dimethylarginine; by host PRMT6. Polar residues predominate over residues 62 to 77 (SQTHQVSLSKQPTSQP). Residue lysine 71 forms a Glycyl lysine isopeptide (Lys-Gly) (interchain with G-Cter in ubiquitin) linkage. Positions 78 to 80 (RGD) match the Cell attachment site motif. Residues 83-96 (GPKESKEKVERETE) are compositionally biased toward basic and acidic residues.

The protein belongs to the lentiviruses Tat family. In terms of assembly, interacts with host CCNT1. Associates with the P-TEFb complex composed at least of Tat, P-TEFb (CDK9 and CCNT1), TAR RNA, RNA Pol II. Recruits the HATs CREBBP, TAF1/TFIID, EP300, PCAF and GCN5L2. Interacts with host KAT5/Tip60; this interaction targets the latter to degradation. Interacts with the host deacetylase SIRT1. Interacts with host capping enzyme RNGTT; this interaction stimulates RNGTT. Binds to host KDR, and to the host integrins ITGAV/ITGB3 and ITGA5/ITGB1. Interacts with host KPNB1/importin beta-1 without previous binding to KPNA1/importin alpha-1. Interacts with EIF2AK2. Interacts with host nucleosome assembly protein NAP1L1; this interaction may be required for the transport of Tat within the nucleus, since the two proteins interact at the nuclear rim. Interacts with host C1QBP/SF2P32; this interaction involves lysine-acetylated Tat. Interacts with the host chemokine receptors CCR2, CCR3 and CXCR4. Interacts with host DPP4/CD26; this interaction may trigger an anti-proliferative effect. Interacts with host LDLR. Interacts with the host extracellular matrix metalloproteinase MMP1. Interacts with host PRMT6; this interaction mediates Tat's methylation. Interacts with, and is ubiquitinated by MDM2/Hdm2. Interacts with host PSMC3 and HTATIP2. Interacts with STAB1; this interaction may overcome SATB1-mediated repression of IL2 and IL2RA (interleukin) in T cells by binding to the same domain than HDAC1. Interacts (when acetylated) with human CDK13, thereby increasing HIV-1 mRNA splicing and promoting the production of the doubly spliced HIV-1 protein Nef. Interacts with host TBP; this interaction modulates the activity of transcriptional pre-initiation complex. Interacts with host RELA. Interacts with host PLSCR1; this interaction negatively regulates Tat transactivation activity by altering its subcellular distribution. In terms of processing, asymmetrical arginine methylation by host PRMT6 seems to diminish the transactivation capacity of Tat and affects the interaction with host CCNT1. Acetylation by EP300, CREBBP, GCN5L2/GCN5 and PCAF regulates the transactivation activity of Tat. EP300-mediated acetylation of Lys-50 promotes dissociation of Tat from the TAR RNA through the competitive binding to PCAF's bromodomain. In addition, the non-acetylated Tat's N-terminus can also interact with PCAF. PCAF-mediated acetylation of Lys-28 enhances Tat's binding to CCNT1. Lys-50 is deacetylated by SIRT1. Post-translationally, polyubiquitination by host MDM2 does not target Tat to degradation, but activates its transactivation function and fosters interaction with CCNT1 and TAR RNA. In terms of processing, phosphorylated by EIF2AK2 on serine and threonine residues adjacent to the basic region important for TAR RNA binding and function. Phosphorylation of Tat by EIF2AK2 is dependent on the prior activation of EIF2AK2 by dsRNA.

It is found in the host nucleus. The protein resides in the host nucleolus. It localises to the host cytoplasm. The protein localises to the secreted. In terms of biological role, transcriptional activator that increases RNA Pol II processivity, thereby increasing the level of full-length viral transcripts. Recognizes a hairpin structure at the 5'-LTR of the nascent viral mRNAs referred to as the transactivation responsive RNA element (TAR) and recruits the cyclin T1-CDK9 complex (P-TEFb complex) that will in turn hyperphosphorylate the RNA polymerase II to allow efficient elongation. The CDK9 component of P-TEFb and other Tat-activated kinases hyperphosphorylate the C-terminus of RNA Pol II that becomes stabilized and much more processive. Other factors such as HTATSF1/Tat-SF1, SUPT5H/SPT5, and HTATIP2 are also important for Tat's function. Besides its effect on RNA Pol II processivity, Tat induces chromatin remodeling of proviral genes by recruiting the histone acetyltransferases (HATs) CREBBP, EP300 and PCAF to the chromatin. This also contributes to the increase in proviral transcription rate, especially when the provirus integrates in transcriptionally silent region of the host genome. To ensure maximal activation of the LTR, Tat mediates nuclear translocation of NF-kappa-B by interacting with host RELA. Through its interaction with host TBP, Tat may also modulate transcription initiation. Tat can reactivate a latently infected cell by penetrating in it and transactivating its LTR promoter. In the cytoplasm, Tat is thought to act as a translational activator of HIV-1 mRNAs. Extracellular circulating Tat can be endocytosed by surrounding uninfected cells via the binding to several surface receptors such as CD26, CXCR4, heparan sulfate proteoglycans (HSPG) or LDLR. Neurons are rarely infected, but they internalize Tat via their LDLR. Through its interaction with nuclear HATs, Tat is potentially able to control the acetylation-dependent cellular gene expression. Modulates the expression of many cellular genes involved in cell survival, proliferation or in coding for cytokines or cytokine receptors. Tat plays a role in T-cell and neurons apoptosis. Tat induced neurotoxicity and apoptosis probably contribute to neuroAIDS. Circulating Tat also acts as a chemokine-like and/or growth factor-like molecule that binds to specific receptors on the surface of the cells, affecting many cellular pathways. In the vascular system, Tat binds to ITGAV/ITGB3 and ITGA5/ITGB1 integrins dimers at the surface of endothelial cells and competes with bFGF for heparin-binding sites, leading to an excess of soluble bFGF. The protein is Protein Tat of Human immunodeficiency virus type 1 group M subtype B (isolate RF/HAT3) (HIV-1).